Here is a 287-residue protein sequence, read N- to C-terminus: Phospholipid phosphatase 2 (287 aa).

The Cytoplasmic segment spans residues 1–4; it reads MERR. The chain crosses the membrane as a helical span at residues 5 to 25; sequence WVFVLLDVLCVLVAALPCAIL. Residues 26 to 51 are Lumenal-facing; it reads TFVNTPYKRGFYCGDDSIRYPYRPDT. Residues 52-72 form a helical membrane-spanning segment; that stretch reads ITHGLMAGVIITATVILVSAG. Residues 73 to 87 lie on the Cytoplasmic side of the membrane; the sequence is EAYLVYTDRLYSRSD. Residues 88 to 108 form a helical membrane-spanning segment; sequence FNNYLAALYKVVGTFLFGAAV. Residues 109 to 161 lie on the Lumenal side of the membrane; it reads SQSLTDLAKYMTGRLRPNFLAVCDPDWSRVNCSAYVQVEVCRGSSANVTESRL. The segment at 117–125 is phosphatase sequence motif I; that stretch reads KYMTGRLRP. N-linked (GlcNAc...) asparagine glycosylation is found at Asn-139 and Asn-155. A helical transmembrane segment spans residues 162-182; it reads SFYSGHSSFGMYCMVFLALYV. A phosphatase sequence motif II region spans residues 164-167; the sequence is YSGH. Residue His-167 is the Proton donors of the active site. The Cytoplasmic segment spans residues 183-193; the sequence is QARLCWKWARL. A helical transmembrane segment spans residues 194–211; the sequence is LRPTVQFFLVAFALYVGY. At 212–218 the chain is on the lumenal side; that stretch reads TRVSDHK. The interval 212–223 is phosphatase sequence motif III; sequence TRVSDHKHHWSD. Catalysis depends on His-219, which acts as the Nucleophile. The chain crosses the membrane as a helical span at residues 219-239; that stretch reads HHWSDVLVGLLQGALVASLTV. At 240-287 the chain is on the cytoplasmic side; the sequence is RYISDFFKARPPQHCPEEEDLERKPSLSLTLALGETDCNHYGYPVSSS.

This sequence belongs to the PA-phosphatase related phosphoesterase family. Forms functional homodimers and homooligomers. Can also form heterooligomers with PLPP1 and PLPP3. N-glycosylated.

It localises to the membrane. The protein resides in the cell membrane. It is found in the early endosome membrane. The protein localises to the endoplasmic reticulum membrane. It catalyses the reaction a 1,2-diacyl-sn-glycero-3-phosphate + H2O = a 1,2-diacyl-sn-glycerol + phosphate. The catalysed reaction is 1,2-dihexadecanoyl-sn-glycero-3-phosphate + H2O = 1,2-dihexadecanoyl-sn-glycerol + phosphate. It carries out the reaction 1,2-di-(9Z-octadecenoyl)-sn-glycero-3-phosphate + H2O = 1,2-di-(9Z-octadecenoyl)-sn-glycerol + phosphate. The enzyme catalyses a monoacyl-sn-glycero-3-phosphate + H2O = a monoacylglycerol + phosphate. It catalyses the reaction (9Z)-octadecenoyl-sn-glycero-3-phosphate + H2O = (9Z-octadecenoyl)-glycerol + phosphate. The catalysed reaction is sphing-4-enine 1-phosphate + H2O = sphing-4-enine + phosphate. It carries out the reaction an N-acylsphing-4-enine 1-phosphate + H2O = an N-acylsphing-4-enine + phosphate. The enzyme catalyses N-(octanoyl)-sphing-4-enine-1-phosphate + H2O = N-octanoylsphing-4-enine + phosphate. It catalyses the reaction N-(9Z-octadecenoyl)-ethanolamine phosphate + H2O = N-(9Z-octadecenoyl) ethanolamine + phosphate. The protein operates within lipid metabolism; phospholipid metabolism. Magnesium-independent phospholipid phosphatase. Insensitive to N-ethylmaleimide. In terms of biological role, magnesium-independent phospholipid phosphatase that catalyzes the dephosphorylation of a variety of glycerolipid and sphingolipid phosphate esters including phosphatidate/PA, lysophosphatidate/LPA, sphingosine 1-phosphate/S1P and ceramide 1-phosphate/C1P. Has no apparent extracellular phosphatase activity and therefore most probably acts intracellularly. Also acts on N-oleoyl ethanolamine phosphate/N-(9Z-octadecenoyl)-ethanolamine phosphate, a potential physiological compound. Through dephosphorylation of these bioactive lipid mediators produces new bioactive compounds and may regulate signal transduction in different cellular processes. Indirectly regulates, for instance, cell cycle G1/S phase transition through its phospholipid phosphatase activity. The protein is Phospholipid phosphatase 2 of Bos taurus (Bovine).